The primary structure comprises 857 residues: Phosphoenolpyruvate carboxylase (857 aa).

Residues H144 and K530 contribute to the active site.

It belongs to the PEPCase type 1 family. In terms of assembly, homotetramer. Requires Mg(2+) as cofactor. In terms of processing, the N-terminus is blocked.

The enzyme catalyses oxaloacetate + phosphate = phosphoenolpyruvate + hydrogencarbonate. Forms oxaloacetate, a four-carbon dicarboxylic acid source for the tricarboxylic acid cycle. The polypeptide is Phosphoenolpyruvate carboxylase (ppc) (Thermus sp. (strain 71)).